We begin with the raw amino-acid sequence, 413 residues long: Glucose-1-phosphate adenylyltransferase (413 aa).

Residues Gly-161, Glu-176–Lys-177, and Ser-195 contribute to the alpha-D-glucose 1-phosphate site.

The protein belongs to the bacterial/plant glucose-1-phosphate adenylyltransferase family. As to quaternary structure, homotetramer.

The catalysed reaction is alpha-D-glucose 1-phosphate + ATP + H(+) = ADP-alpha-D-glucose + diphosphate. Its pathway is glycan biosynthesis; glycogen biosynthesis. Functionally, involved in the biosynthesis of ADP-glucose, a building block required for the elongation reactions to produce glycogen. Catalyzes the reaction between ATP and alpha-D-glucose 1-phosphate (G1P) to produce pyrophosphate and ADP-Glc. The sequence is that of Glucose-1-phosphate adenylyltransferase from Anaeromyxobacter dehalogenans (strain 2CP-C).